We begin with the raw amino-acid sequence, 242 residues long: Small ribosomal subunit protein uS3 (242 aa).

The KH type-2 domain maps to 39-110 (IRKFIHKKYG…QVRINVVEVE (72 aa)). The interval 216 to 242 (QPMPVGAAPRRRASRRPQQFEDRSNEG) is disordered. The segment covering 233–242 (QQFEDRSNEG) has biased composition (basic and acidic residues).

This sequence belongs to the universal ribosomal protein uS3 family. As to quaternary structure, part of the 30S ribosomal subunit. Forms a tight complex with proteins S10 and S14.

Functionally, binds the lower part of the 30S subunit head. Binds mRNA in the 70S ribosome, positioning it for translation. This chain is Small ribosomal subunit protein uS3, found in Synechococcus sp. (strain CC9605).